The primary structure comprises 443 residues: ATP-dependent protease ATPase subunit HslU (443 aa).

ATP-binding positions include Ile20, 62-67, Asp255, Glu321, and Arg393; that span reads GVGKTE.

The protein belongs to the ClpX chaperone family. HslU subfamily. A double ring-shaped homohexamer of HslV is capped on each side by a ring-shaped HslU homohexamer. The assembly of the HslU/HslV complex is dependent on binding of ATP.

The protein localises to the cytoplasm. In terms of biological role, ATPase subunit of a proteasome-like degradation complex; this subunit has chaperone activity. The binding of ATP and its subsequent hydrolysis by HslU are essential for unfolding of protein substrates subsequently hydrolyzed by HslV. HslU recognizes the N-terminal part of its protein substrates and unfolds these before they are guided to HslV for hydrolysis. In Helicobacter pylori (strain ATCC 700392 / 26695) (Campylobacter pylori), this protein is ATP-dependent protease ATPase subunit HslU.